Here is a 388-residue protein sequence, read N- to C-terminus: L-arabinitol 4-dehydrogenase (388 aa).

8 residues coordinate Zn(2+): Cys-55, His-80, Glu-81, Cys-110, Cys-113, Cys-116, Cys-124, and Glu-165. NAD(+)-binding positions include 192 to 193 (PI), Asp-213, Arg-218, Ile-293, and 317 to 319 (QYR).

Belongs to the zinc-containing alcohol dehydrogenase family. In terms of assembly, homotetramer. The cofactor is Zn(2+).

The enzyme catalyses L-arabinitol + NAD(+) = L-xylulose + NADH + H(+). The protein operates within carbohydrate degradation; L-arabinose degradation via L-arabinitol; D-xylulose 5-phosphate from L-arabinose (fungal route): step 2/5. In terms of biological role, catalyzes the NAD-dependent oxidation of L-arabinitol to L-xylulose in the fungal L-arabinose catabolic pathway. L-arabinose catabolism is important for using plant material as a carbon source. NADP cannot act as a cosubstrate. The polypeptide is L-arabinitol 4-dehydrogenase (lad) (Talaromyces emersonii (Thermophilic fungus)).